A 90-amino-acid polypeptide reads, in one-letter code: Probable Fe(2+)-trafficking protein (90 aa).

The protein belongs to the Fe(2+)-trafficking protein family.

Its function is as follows. Could be a mediator in iron transactions between iron acquisition and iron-requiring processes, such as synthesis and/or repair of Fe-S clusters in biosynthetic enzymes. In Koribacter versatilis (strain Ellin345), this protein is Probable Fe(2+)-trafficking protein.